A 286-amino-acid polypeptide reads, in one-letter code: Shikimate dehydrogenase (NADP(+)) (286 aa).

Shikimate contacts are provided by residues 20 to 22 and Ser-67; that span reads SLS. Lys-71 serves as the catalytic Proton acceptor. The shikimate site is built by Asn-92 and Asp-107. NADP(+)-binding positions include 131 to 135 and Ala-230; that span reads GGGGA. Residue Tyr-232 participates in shikimate binding. Residue Gly-253 participates in NADP(+) binding.

This sequence belongs to the shikimate dehydrogenase family. As to quaternary structure, homodimer.

It carries out the reaction shikimate + NADP(+) = 3-dehydroshikimate + NADPH + H(+). The protein operates within metabolic intermediate biosynthesis; chorismate biosynthesis; chorismate from D-erythrose 4-phosphate and phosphoenolpyruvate: step 4/7. Involved in the biosynthesis of the chorismate, which leads to the biosynthesis of aromatic amino acids. Catalyzes the reversible NADPH linked reduction of 3-dehydroshikimate (DHSA) to yield shikimate (SA). In Lactococcus lactis subsp. lactis (strain IL1403) (Streptococcus lactis), this protein is Shikimate dehydrogenase (NADP(+)).